The following is a 387-amino-acid chain: Odorant receptor 94a (387 aa).

At 1-45 (MDKHKDRIESMRLILQVMQLFGLWPWSLKSEEEWTFTGFVKRNYR) the chain is on the cytoplasmic side. A helical membrane pass occupies residues 46 to 66 (FLLHLPITFTFIGLMWLEAFI). Residues 67-75 (SSNLEQAGQ) are Extracellular-facing. A helical membrane pass occupies residues 76–96 (VLYMSITEMALVVKILSIWHY). Topologically, residues 97–133 (RTEAWRLMYELQHAPDYQLHNQEEVDFWRREQRFFKW) are cytoplasmic. A helical membrane pass occupies residues 134-154 (FFYIYILISLGVVYSGCTGVL). The Extracellular segment spans residues 155 to 191 (FLEGYELPFAYYVPFEWQNERRYWFAYGYDMAGMTLT). A helical membrane pass occupies residues 192–212 (CISNITLDTLGCYFLFHISLL). The Cytoplasmic portion of the chain corresponds to 213–255 (YRLLGLRLRETKNMKNDTIFGQQLRAIFIMHQRIRSLTLTCQR). Residues 256-276 (IVSPYILSQIILSALIICFSG) form a helical membrane-spanning segment. Residues 277 to 290 (YRLQHVGIRDNPGQ) are Extracellular-facing. A helical transmembrane segment spans residues 291–311 (FISMLQFVSVMILQIYLPCYY). Over 312 to 362 (GNEITVYANQLTNEVYHTNWLECRPPIRKLLNAYMEHLKKPVTIRAGNFFA) the chain is Cytoplasmic. A helical transmembrane segment spans residues 363–383 (VGLPIFVKTINNAYSFLALLL). An N-linked (GlcNAc...) asparagine glycan is attached at Asn-384. Over 384–387 (NVSN) the chain is Extracellular.

The protein belongs to the insect chemoreceptor superfamily. Heteromeric odorant receptor channel (TC 1.A.69) family. Or2a subfamily. Interacts with Orco. Complexes exist early in the endomembrane system in olfactory sensory neurons (OSNs), coupling these complexes to the conserved ciliary trafficking pathway.

The protein localises to the cell membrane. Its function is as follows. Odorant receptor which mediates acceptance or avoidance behavior, depending on its substrates. The odorant receptor repertoire encodes a large collection of odor stimuli that vary widely in identity, intensity, and duration. May form a complex with Orco to form odorant-sensing units, providing sensitive and prolonged odorant signaling and calcium permeability. The sequence is that of Odorant receptor 94a (Or94a) from Drosophila melanogaster (Fruit fly).